Reading from the N-terminus, the 83-residue chain is Small ribosomal subunit protein uS17 (83 aa).

The protein belongs to the universal ribosomal protein uS17 family. In terms of assembly, part of the 30S ribosomal subunit.

In terms of biological role, one of the primary rRNA binding proteins, it binds specifically to the 5'-end of 16S ribosomal RNA. This Buchnera aphidicola subsp. Acyrthosiphon pisum (strain 5A) protein is Small ribosomal subunit protein uS17.